The sequence spans 398 residues: Delta-aminolevulinic acid dehydratase, chloroplastic (398 aa).

The segment at 48–87 (VPEAPPVPPTPASPAGTPVVPSLPIQRRPRRNRRSPALRS) is disordered. Over residues 50–59 (EAPPVPPTPA) the composition is skewed to pro residues. Residues 60-69 (SPAGTPVVPS) are compositionally biased toward low complexity. Positions 74-83 (RRPRRNRRSP) are enriched in basic residues. K266 serves as the catalytic Schiff-base intermediate with substrate. 5-aminolevulinate is bound by residues R276 and K288. Residue E304 participates in Mg(2+) binding. K319 (schiff-base intermediate with substrate) is an active-site residue. Residues S345 and Y384 each coordinate 5-aminolevulinate.

This sequence belongs to the ALAD family. Homooctamer; formed by oligomerization of dimers. Probably also forms lower oligomers. The cofactor is Mg(2+).

The protein resides in the plastid. Its subcellular location is the chloroplast. The enzyme catalyses 2 5-aminolevulinate = porphobilinogen + 2 H2O + H(+). It participates in porphyrin-containing compound metabolism; protoporphyrin-IX biosynthesis; coproporphyrinogen-III from 5-aminolevulinate: step 1/4. Its activity is regulated as follows. Activated by magnesium. Inhibited by succinyl acetone. Enzyme activity may depend on the oligomerization state, where the fully active octamer may dissociate and reassemble into less active lower oligomers. Catalyzes an early step in the biosynthesis of tetrapyrroles. Binds two molecules of 5-aminolevulinate per subunit, each at a distinct site, and catalyzes their condensation to form porphobilinogen. The chain is Delta-aminolevulinic acid dehydratase, chloroplastic (HEMB) from Pisum sativum (Garden pea).